Here is a 92-residue protein sequence, read N- to C-terminus: Serine rich endogenous peptide 11 (92 aa).

The signal sequence occupies residues 1–29; sequence MENNTFSSKSINLLILLLLLCTFLCQTES. Residues 50–92 form a disordered region; sequence PNTDIGTPSSTSDRGGGGNGRRLMSQMDVGASSSGQGGGRNRH. Positions 53-62 are enriched in polar residues; it reads DIGTPSSTSD. 2 consecutive short sequence motifs (SCOOP motif) follow at residues 53 to 67 and 75 to 89; these read DIGTPSSTSDRGGGG and QMDVGASSSGQGGGR. 2 consecutive short sequence motifs (sxS motif essential for MIK2 binding) follow at residues 59 to 61 and 81 to 83; these read STS and SSS.

Belongs to the serine rich endogenous peptide (SCOOP) phytocytokine family. In terms of assembly, interacts with MIK2 (via extracellular leucine-rich repeat domain); this interaction triggers the formation of complex between MIK2 and the BAK1/SERK3 and SERK4 coreceptors, and subsequent BAK1 activation by phosphorylation. As to expression, mostly expressed in seedlings shoots and roots, and, to a lower extent, in leaves.

The protein resides in the cell membrane. The protein localises to the secreted. Its subcellular location is the extracellular space. It is found in the apoplast. Brassicaceae-specific phytocytokine (plant endogenous peptide released into the apoplast) perceived by MIK2 in a BAK1/SERK3 and SERK4 coreceptors-dependent manner, that modulates various physiological and antimicrobial processes including growth prevention and reactive oxygen species (ROS) response regulation. In Arabidopsis thaliana (Mouse-ear cress), this protein is Serine rich endogenous peptide 11.